Consider the following 305-residue polypeptide: Insulin-like growth factor-binding protein 2 (305 aa).

A signal peptide spans 1-34 (MLPRLGGPALPLLLPSLLLLLLLGAGGCGPGVRA). In terms of domain architecture, IGFBP N-terminal spans 36 to 118 (VLFRCPPCTP…VTGAGTCEKR (83 aa)). Disulfide bonds link Cys-40/Cys-68, Cys-43/Cys-70, Cys-51/Cys-71, Cys-59/Cys-74, Cys-82/Cys-95, Cys-89/Cys-115, Cys-207/Cys-241, Cys-252/Cys-263, and Cys-265/Cys-286. The region spanning 204–286 (RTPCQQELDQ…APTIRGDPEC (83 aa)) is the Thyroglobulin type-1 domain. The Cell attachment site signature appears at 281-283 (RGD).

Interacts with IGF1. Interacts with IGF2. Interacts (via RGD motif) with integrin alpha5/ITGA5; this interaction induces cell migration, adhesion or apoptosis according to the context. Interacts with PTPRB; this interaction leads to PTPRB dimerization and inactivation. Cleaved by MMP9 leading to release of free IGF2 from IGFBP2-IGF2 complex, which contributes to enhance the motility and the growth of astrocytes. Post-translationally, O-glycosylated. In terms of tissue distribution, highly expressed in adult liver, but also in kidney, lung, brain, spleen, testis and ovary.

Its subcellular location is the secreted. In terms of biological role, multifunctional protein that plays a critical role in regulating the availability of IGFs such as IGF1 and IGF2 to their receptors and thereby regulates IGF-mediated cellular processes including proliferation, differentiation, and apoptosis in a cell-type specific manner. Functions coordinately with receptor protein tyrosine phosphatase beta/PTPRB and the IGF1 receptor to regulate IGF1-mediated signaling by stimulating the phosphorylation of PTEN leading to its inactivation and AKT1 activation. Plays a positive role in cell migration via interaction with integrin alpha5/ITGA5 through an RGD motif. Additionally, interaction with ITGA5/ITGB1 enhances the adhesion of endothelial progenitor cells to endothelial cells. Upon mitochondrial damage, facilitates apoptosis with ITGA5 of podocytes, and then activates the phosphorylation of focal adhesion kinase (FAK)-mediated mitochondrial injury. The protein is Insulin-like growth factor-binding protein 2 (Igfbp2) of Mus musculus (Mouse).